The following is a 157-amino-acid chain: 2-C-methyl-D-erythritol 2,4-cyclodiphosphate synthase (157 aa).

Asp-8 and His-10 together coordinate a divalent metal cation. 4-CDP-2-C-methyl-D-erythritol 2-phosphate-binding positions include 8-10 and 34-35; these read DVH and HS. An a divalent metal cation-binding site is contributed by His-42. 4-CDP-2-C-methyl-D-erythritol 2-phosphate is bound by residues 56–58, 61–65, 132–135, Phe-139, and Arg-142; these read DIG, FPDSD, and TTTE.

The protein belongs to the IspF family. Homotrimer. A divalent metal cation is required as a cofactor.

The enzyme catalyses 4-CDP-2-C-methyl-D-erythritol 2-phosphate = 2-C-methyl-D-erythritol 2,4-cyclic diphosphate + CMP. Its pathway is isoprenoid biosynthesis; isopentenyl diphosphate biosynthesis via DXP pathway; isopentenyl diphosphate from 1-deoxy-D-xylulose 5-phosphate: step 4/6. In terms of biological role, involved in the biosynthesis of isopentenyl diphosphate (IPP) and dimethylallyl diphosphate (DMAPP), two major building blocks of isoprenoid compounds. Catalyzes the conversion of 4-diphosphocytidyl-2-C-methyl-D-erythritol 2-phosphate (CDP-ME2P) to 2-C-methyl-D-erythritol 2,4-cyclodiphosphate (ME-CPP) with a corresponding release of cytidine 5-monophosphate (CMP). The sequence is that of 2-C-methyl-D-erythritol 2,4-cyclodiphosphate synthase from Syntrophomonas wolfei subsp. wolfei (strain DSM 2245B / Goettingen).